The primary structure comprises 119 residues: Large ribosomal subunit protein uL18 (119 aa).

This sequence belongs to the universal ribosomal protein uL18 family. In terms of assembly, part of the 50S ribosomal subunit; part of the 5S rRNA/L5/L18/L25 subcomplex. Contacts the 5S and 23S rRNAs.

This is one of the proteins that bind and probably mediate the attachment of the 5S RNA into the large ribosomal subunit, where it forms part of the central protuberance. The polypeptide is Large ribosomal subunit protein uL18 (Micrococcus luteus (Micrococcus lysodeikticus)).